The following is a 253-amino-acid chain: CD151 antigen (253 aa).

The Cytoplasmic portion of the chain corresponds to methionine 1–tyrosine 18. 2 S-palmitoyl cysteine lipidation sites follow: cysteine 11 and cysteine 15. The chain crosses the membrane as a helical span at residues leucine 19–isoleucine 39. The Extracellular segment spans residues tryptophan 40–tyrosine 57. A helical membrane pass occupies residues leucine 58 to glycine 78. Residues cysteine 79–arginine 91 lie on the Cytoplasmic side of the membrane. The chain crosses the membrane as a helical span at residues leucine 92–tyrosine 112. Residues valine 113–arginine 221 lie on the Extracellular side of the membrane. N-linked (GlcNAc...) asparagine glycosylation is present at asparagine 159. The chain crosses the membrane as a helical span at residues valine 222–cysteine 242. Residues cysteine 242 and cysteine 243 are each lipidated (S-palmitoyl cysteine). Over cysteine 243–tyrosine 253 the chain is Cytoplasmic.

It belongs to the tetraspanin (TM4SF) family. Interacts with integrins ITGA3:ITGB1, ITGA5:ITGB1, ITGA3:ITGB1 and ITGA6:ITGB4 and with CD9 and CD181. Interacts (via the second extracellular domain) with integrin ITGAV:ITGB3. Interacts with ITGA3; this interaction modulates ITGA3 glycosylation pattern. Interacts with F11R. Interacts with RAC1 and CDC42; these interactions mediate physical association of RAC1 and CDC42 with integrin adhesion receptor complexes. In terms of processing, palmitoylated. Palmitoylation by ZDHHC2 regulates CD151 expression, association with other tetraspanin family proteins and function in cell adhesion. Ubiquitinated by RNF128 on lysine residues present in the tetraspanin amino terminus via 'Lys-48'-linked ubiquitin leading to proteasomal degradation.

The protein localises to the cell membrane. Structural component of specialized membrane microdomains known as tetraspanin-enriched microdomains (TERMs), which act as platforms for receptor clustering and signaling. Plays a role in various cellular and molecular mechanism through its association with both integrin and non-integrin proteins. These interactions facilitate critical cellular functions, including cell-to-cell communication, wound healing, platelet aggregation, trafficking, cell motility, and angiogenesis. Via interaction with JAM-A/F11R and integrin ITGA3:ITGB1, promotes the recruitment of signaling molecules such as RAC1, CDC42 and RhoGTPases to facilitate the polarization of epithelial cells and the reorganization of the actin cytoskeleton, which are critical steps in cell migration process. Regulates the glycosylation pattern of ITGA3:ITGB1 thereby modulating its activity. Plays an essential role in the maintenance of central laminin-binding integrin ITGA6:ITGB4-containing adhesion complexes. Essential for the proper assembly of the glomerular and tubular basement membranes in kidney. Contributes to T-cell activation by modulating integrin signaling leading to activation of downstream targets PTK2 and MAPK1/MAPK3. The polypeptide is CD151 antigen (CD151) (Chlorocebus aethiops (Green monkey)).